A 428-amino-acid polypeptide reads, in one-letter code: MTRSDELFEQAKKTIPGGVNSPVRAFNGVGGSPRFIEKADGAYIYDADGKAYIDYVGSWGPMILGHNHPKIREAVLAAVENGLSFGAPTELEVTMAEKVIEMVPSMEQVRMVSSGTEATMSAIRLARGFTSRDKILKFEGCYHGHADCLLVKAGSGALTLGQPSSPGIPEDFAKHTLTATYNDLESVKALFEQYPEEISCIILEPVAGNMNCIPPVEGFLQGLRAICDQYGALMIIDEVMTGFRVSKSGAQGHYGVTPDLTTLGKVIGGGMPVGAFGGRKDVMQFIAPTGPVYQAGTLSGNPIAMSAGLAQMDALCEEGVYEELAAKTKRIAEGFKAAANKHGIPMSINYVGGMFGLFFTEEEKVTSFEQVTKCDADKFPEFYHGMLDEGVYLAPSAYEAGFLSMAHGEKELEETLAAADRVFAKMAK.

An N6-(pyridoxal phosphate)lysine modification is found at Lys265.

Belongs to the class-III pyridoxal-phosphate-dependent aminotransferase family. HemL subfamily. Homodimer. Pyridoxal 5'-phosphate serves as cofactor.

It localises to the cytoplasm. It carries out the reaction (S)-4-amino-5-oxopentanoate = 5-aminolevulinate. It participates in porphyrin-containing compound metabolism; protoporphyrin-IX biosynthesis; 5-aminolevulinate from L-glutamyl-tRNA(Glu): step 2/2. This Shewanella sediminis (strain HAW-EB3) protein is Glutamate-1-semialdehyde 2,1-aminomutase.